Here is a 442-residue protein sequence, read N- to C-terminus: tRNA modification GTPase MnmE (442 aa).

R24, E82, and K122 together coordinate (6S)-5-formyl-5,6,7,8-tetrahydrofolate. Positions 219 to 366 (GFKVALVGEP…LRRALKREIE (148 aa)) constitute a TrmE-type G domain. N229 contacts K(+). Residues 229–234 (NAGKST), 248–254 (TDIAGTT), and 273–276 (DTAG) contribute to the GTP site. S233 is a binding site for Mg(2+). Positions 248, 250, and 253 each coordinate K(+). T254 serves as a coordination point for Mg(2+). K442 contacts (6S)-5-formyl-5,6,7,8-tetrahydrofolate.

Belongs to the TRAFAC class TrmE-Era-EngA-EngB-Septin-like GTPase superfamily. TrmE GTPase family. As to quaternary structure, homodimer. Heterotetramer of two MnmE and two MnmG subunits. The cofactor is K(+).

It localises to the cytoplasm. Exhibits a very high intrinsic GTPase hydrolysis rate. Involved in the addition of a carboxymethylaminomethyl (cmnm) group at the wobble position (U34) of certain tRNAs, forming tRNA-cmnm(5)s(2)U34. This Agrobacterium fabrum (strain C58 / ATCC 33970) (Agrobacterium tumefaciens (strain C58)) protein is tRNA modification GTPase MnmE.